A 267-amino-acid polypeptide reads, in one-letter code: tRNA pseudouridine synthase A (267 aa).

Residue aspartate 51 is the Nucleophile of the active site. Tyrosine 109 is a binding site for substrate.

It belongs to the tRNA pseudouridine synthase TruA family. Homodimer.

It catalyses the reaction uridine(38/39/40) in tRNA = pseudouridine(38/39/40) in tRNA. Functionally, formation of pseudouridine at positions 38, 39 and 40 in the anticodon stem and loop of transfer RNAs. This is tRNA pseudouridine synthase A from Staphylococcus aureus (strain Mu3 / ATCC 700698).